A 523-amino-acid chain; its full sequence is Calcium uptake protein 3, mitochondrial (523 aa).

Residues M1–R6 constitute a mitochondrion transit peptide. Residues P226–N261 enclose the EF-hand 1 domain. Residues D238, D240, N242, M244, D246, and E249 each contribute to the Ca(2+) site. The 36-residue stretch at E395 to E430 folds into the EF-hand 2; degenerate domain. The EF-hand 3 domain occupies S464–G499. D476, D478, D480, Q482, and E487 together coordinate Ca(2+).

The protein belongs to the MICU1 family. MICU3 subfamily. Heterodimer; disulfide-linked; heterodimerizes with MICU1. Heterodimerizes with isoform 3 of MICU1 (MICU1.1) in skeletal muscle. Component of the uniplex complex, composed of MCU, EMRE/SMDT1, MICU1 and MICU3 in a 4:4:1:1 stoichiometry. In terms of tissue distribution, predominantly expressed in skeletal muscle and central nervous system.

It is found in the mitochondrion intermembrane space. The protein resides in the mitochondrion inner membrane. Tissue-specific calcium sensor of the mitochondrial calcium uniporter (MCU) channel, which specifically regulates MCU channel activity in the central nervous system and skeletal muscle. Senses calcium level via its EF-hand domains: compared to MICU1 and MICU2, MICU3 has a higher affinity for calcium. MICU1 and MICU3 form a disulfide-linked heterodimer that stimulates and inhibits MCU activity, depending on the concentration of calcium. At low calcium levels, MICU1 occludes the pore of the MCU channel, preventing mitochondrial calcium uptake. At higher calcium levels, calcium-binding to MICU1 and MICU3 induces a conformational change that weakens MCU-MICU1 interactions and moves the MICU1-MICU3 heterodimer away from the pore, allowing calcium permeation through the MCU channel. The high calcium affinity of MICU3 lowers the calcium threshold necessary for calcium permeation through the MCU channel. The MICU1-MICU3 heterodimer promotes flexibility of neurotransmission in neuronal cells by enhancing mitochondrial calcium uptake in presynapses. It is also required to increase mitochondrial calcium uptake in skeletal muscle cells, thereby increasing ATP production. This is Calcium uptake protein 3, mitochondrial from Mus musculus (Mouse).